Consider the following 66-residue polypeptide: Large ribosomal subunit protein bL35 (66 aa).

It belongs to the bacterial ribosomal protein bL35 family.

The sequence is that of Large ribosomal subunit protein bL35 from Borreliella burgdorferi (strain ATCC 35210 / DSM 4680 / CIP 102532 / B31) (Borrelia burgdorferi).